The chain runs to 62 residues: MVQLTRENRSKFVKVKCPDCENEQTIFDRACTPVDCIVCGSNLATPTGGKAQIKAEIITAFE.

Zn(2+)-binding residues include Cys17, Cys20, Cys36, and Cys39. A C4-type zinc finger spans residues 17-39 (CPDCENEQTIFDRACTPVDCIVC).

Belongs to the eukaryotic ribosomal protein eS27 family. As to quaternary structure, part of the 30S ribosomal subunit. Requires Zn(2+) as cofactor.

The sequence is that of Small ribosomal subunit protein eS27 from Methanospirillum hungatei JF-1 (strain ATCC 27890 / DSM 864 / NBRC 100397 / JF-1).